Here is a 449-residue protein sequence, read N- to C-terminus: Exodeoxyribonuclease 7 large subunit (449 aa).

Belongs to the XseA family. Heterooligomer composed of large and small subunits.

Its subcellular location is the cytoplasm. It catalyses the reaction Exonucleolytic cleavage in either 5'- to 3'- or 3'- to 5'-direction to yield nucleoside 5'-phosphates.. Bidirectionally degrades single-stranded DNA into large acid-insoluble oligonucleotides, which are then degraded further into small acid-soluble oligonucleotides. This is Exodeoxyribonuclease 7 large subunit from Salmonella heidelberg (strain SL476).